Here is a 143-residue protein sequence, read N- to C-terminus: Putative phosphotransferase IIA component SgcA (143 aa).

Positions 1-143 (MINDIKWVQA…DDALFALVSG (143 aa)) constitute a PTS EIIA type-2 domain. Residue His-63 is the Tele-phosphohistidine intermediate of the active site.

Its subcellular location is the cytoplasm. The phosphoenolpyruvate-dependent sugar phosphotransferase system (sugar PTS), a major carbohydrate active -transport system, catalyzes the phosphorylation of incoming sugar substrates concomitantly with their translocation across the cell membrane. This Escherichia coli (strain K12) protein is Putative phosphotransferase IIA component SgcA (sgcA).